The following is a 234-amino-acid chain: CD-NTase-associated protein 13 (234 aa).

A helical transmembrane segment spans residues Thr20–Ile42.

This sequence in the C-terminal section; belongs to the bacterial STING family.

Its subcellular location is the cell inner membrane. In terms of biological role, effector protein of a CBASS antivirus system. CBASS (cyclic oligonucleotide-based antiphage signaling system) provides immunity against bacteriophage. The CD-NTase protein synthesizes cyclic nucleotides in response to infection; these serve as specific second messenger signals. The signals activate a diverse range of effectors, leading to bacterial cell death and thus abortive phage infection. A type I-D CBASS(GG) system. Its function is as follows. Binds c-di-GMP (synthesized by the cognate CdnE encoded upstream in the same operon) and about 10-fold less well 3'3'-cGAMP, but not c-di-AMP, 2'3'-cGAMP or cUMP-AMP (tested with a protein without the transmembrane region). The effector protein for this CBASS system, its activity is stimulated by c-di-GMP and leads to cell death. This chain is CD-NTase-associated protein 13, found in Roseivirga ehrenbergii (strain DSM 102268 / JCM 13514 / KCTC 12282 / NCIMB 14502 / KMM 6017).